The chain runs to 94 residues: DNA-directed RNA polymerase subunit omega (94 aa).

This sequence belongs to the RNA polymerase subunit omega family. As to quaternary structure, the RNAP catalytic core consists of 2 alpha, 1 beta, 1 beta' and 1 omega subunit. When a sigma factor is associated with the core the holoenzyme is formed, which can initiate transcription.

It catalyses the reaction RNA(n) + a ribonucleoside 5'-triphosphate = RNA(n+1) + diphosphate. In terms of biological role, promotes RNA polymerase assembly. Latches the N- and C-terminal regions of the beta' subunit thereby facilitating its interaction with the beta and alpha subunits. In Photobacterium profundum (strain SS9), this protein is DNA-directed RNA polymerase subunit omega.